The primary structure comprises 510 residues: NAD(P)H-quinone oxidoreductase subunit 2 B, chloroplastic (510 aa).

The next 13 membrane-spanning stretches (helical) occupy residues 24-44, 57-77, 99-119, 124-144, 150-170, 183-203, 227-247, 295-315, 323-343, 347-367, 395-415, 418-438, and 484-504; these read LLLF…GLIL, IPWL…ALLF, IFQF…VEYI, MAIT…MFLC, ITIF…SGYT, YLLM…WLYG, PGIS…LSPA, WHLL…LIAI, MLAY…IVGD, GYAS…GTFA, ALSS…AGFF, LHLF…IGLL, and MIVC…IIAI.

It belongs to the complex I subunit 2 family. In terms of assembly, NDH is composed of at least 16 different subunits, 5 of which are encoded in the nucleus.

The protein resides in the plastid. It localises to the chloroplast thylakoid membrane. It catalyses the reaction a plastoquinone + NADH + (n+1) H(+)(in) = a plastoquinol + NAD(+) + n H(+)(out). The enzyme catalyses a plastoquinone + NADPH + (n+1) H(+)(in) = a plastoquinol + NADP(+) + n H(+)(out). Functionally, NDH shuttles electrons from NAD(P)H:plastoquinone, via FMN and iron-sulfur (Fe-S) centers, to quinones in the photosynthetic chain and possibly in a chloroplast respiratory chain. The immediate electron acceptor for the enzyme in this species is believed to be plastoquinone. Couples the redox reaction to proton translocation, and thus conserves the redox energy in a proton gradient. The polypeptide is NAD(P)H-quinone oxidoreductase subunit 2 B, chloroplastic (Chloranthus spicatus (Chulantree)).